Here is a 193-residue protein sequence, read N- to C-terminus: Thymidine kinase (193 aa).

Residues 15-22 (GCMYSGKT) and 87-90 (DELH) each bind ATP. The Proton acceptor role is filled by Glu-88. Residues Cys-147, Cys-150, Cys-185, and Cys-188 each coordinate Zn(2+).

This sequence belongs to the thymidine kinase family. Homotetramer.

It is found in the cytoplasm. It catalyses the reaction thymidine + ATP = dTMP + ADP + H(+). The protein is Thymidine kinase of Chloroflexus aurantiacus (strain ATCC 29366 / DSM 635 / J-10-fl).